Consider the following 590-residue polypeptide: UvrABC system protein C (590 aa).

The GIY-YIG domain occupies 15-92 (DLPGCYMMKD…IQKHKPYYNI (78 aa)). The UVR domain maps to 197 to 232 (SKIKKELEQKMETASENLEFERAAEIRDQIHYVEMT).

Belongs to the UvrC family. Interacts with UvrB in an incision complex.

The protein resides in the cytoplasm. Functionally, the UvrABC repair system catalyzes the recognition and processing of DNA lesions. UvrC both incises the 5' and 3' sides of the lesion. The N-terminal half is responsible for the 3' incision and the C-terminal half is responsible for the 5' incision. This is UvrABC system protein C from Ligilactobacillus salivarius (strain UCC118) (Lactobacillus salivarius).